The sequence spans 91 residues: Small ribosomal subunit protein uS19 (91 aa).

Belongs to the universal ribosomal protein uS19 family.

Its function is as follows. Protein S19 forms a complex with S13 that binds strongly to the 16S ribosomal RNA. The protein is Small ribosomal subunit protein uS19 of Synechococcus sp. (strain CC9311).